Reading from the N-terminus, the 865-residue chain is Protein translocase subunit SecA (865 aa).

Residues Gln-93, 111–115 (GEGKT), and Asp-501 each bind ATP. Zn(2+) contacts are provided by Cys-841, Cys-843, Cys-852, and Cys-853.

The protein belongs to the SecA family. In terms of assembly, monomer and homodimer. Part of the essential Sec protein translocation apparatus which comprises SecA, SecYEG and auxiliary proteins SecDF-YajC and YidC. Zn(2+) is required as a cofactor.

It localises to the cell inner membrane. Its subcellular location is the cytoplasm. It carries out the reaction ATP + H2O + cellular proteinSide 1 = ADP + phosphate + cellular proteinSide 2.. Part of the Sec protein translocase complex. Interacts with the SecYEG preprotein conducting channel. Has a central role in coupling the hydrolysis of ATP to the transfer of proteins into and across the cell membrane, serving as an ATP-driven molecular motor driving the stepwise translocation of polypeptide chains across the membrane. The chain is Protein translocase subunit SecA from Helicobacter pylori (strain G27).